A 355-amino-acid chain; its full sequence is Ornithine transcarbamylase, mitochondrial (355 aa).

The N-terminal 35 residues, 1 to 35, are a transit peptide targeting the mitochondrion; sequence MLFINLRTLLNNAALRNGHNFVVRNFRCGQPVQDK. Residue lysine 71 is modified to N6-acetyllysine; alternate. Lysine 71 is subject to N6-succinyllysine; alternate. Residue lysine 81 is modified to N6-succinyllysine. At lysine 89 the chain carries N6-acetyllysine; alternate. Lysine 89 carries the post-translational modification N6-succinyllysine; alternate. 91 to 95 contacts carbamoyl phosphate; sequence STRTR. Residue serine 134 is modified to Phosphoserine. Carbamoyl phosphate is bound at residue arginine 142. L-ornithine is bound at residue arginine 142. The residue at position 145 (lysine 145) is an N6-acetyllysine; alternate. N6-succinyllysine; alternate is present on lysine 145. Histidine 169 contacts carbamoyl phosphate. Asparagine 200 contributes to the L-ornithine binding site. Residues lysine 222, lysine 232, and lysine 239 each carry the N6-acetyllysine; alternate modification. Residues lysine 222, lysine 232, and lysine 239 each carry the N6-succinyllysine; alternate modification. Residue lysine 244 is modified to N6-acetyllysine. Residue 264–268 participates in L-ornithine binding; the sequence is DTWIS. 2 positions are modified to N6-succinyllysine: lysine 275 and lysine 290. Lysine 293 bears the N6-acetyllysine; alternate mark. Lysine 293 carries the post-translational modification N6-succinyllysine; alternate. Residue 303 to 306 coordinates L-ornithine; it reads HCLP. Cysteine 304 is a catalytic residue. Position 308 is an N6-acetyllysine; alternate (lysine 308). Lysine 308 carries the post-translational modification N6-succinyllysine; alternate. Residue arginine 331 participates in carbamoyl phosphate binding. L-ornithine is bound at residue arginine 331.

Belongs to the aspartate/ornithine carbamoyltransferase superfamily. OTCase family. As to quaternary structure, homotrimer. Acetylation at Lys-89 negatively regulates ornithine carbamoyltransferase activity in response to nutrient signals.

The protein localises to the mitochondrion matrix. The catalysed reaction is carbamoyl phosphate + L-ornithine = L-citrulline + phosphate + H(+). The protein operates within nitrogen metabolism; urea cycle; L-citrulline from L-ornithine and carbamoyl phosphate: step 1/1. Negatively regulated by lysine acetylation. Its function is as follows. Catalyzes the second step of the urea cycle, the condensation of carbamoyl phosphate with L-ornithine to form L-citrulline. The urea cycle ensures the detoxification of ammonia by converting it to urea for excretion. This chain is Ornithine transcarbamylase, mitochondrial, found in Ovis aries (Sheep).